A 623-amino-acid chain; its full sequence is Protein Atg16l2 (623 aa).

A compositionally biased stretch (basic and acidic residues) spans 64–79; it reads PKDAISTRHEDWREEV. Positions 64–93 are disordered; it reads PKDAISTRHEDWREEVSGTGPDQVSSPASL. Positions 116 to 229 form a coiled coil; the sequence is VKKSAALDTL…ANQALVSQEL (114 aa). 7 WD repeats span residues 338-377, 382-421, 424-458, 459-502, 504-543, 550-589, and 593-623; these read AHLS…LEAN, GAGG…SKET, GHKD…LGRA, YCSR…CIQV, PVQG…IRQV, KCSS…LETS, and PHCT…VLWH.

This sequence belongs to the WD repeat ATG16 family. Homooligomer. Heterooligomer with ATG16L2. Interacts with ATG5. Self-oligomerizes to form a 800-kDa complex composed of ATG12-ATG5 and ATG16L2. Interacts with RAB33B. As to expression, widely expressed.

It is found in the cytoplasm. It localises to the cytosol. Its function is as follows. May play a role in regulating epithelial homeostasis in an ATG16L1-dependent manner. The chain is Protein Atg16l2 (Atg16l2) from Mus musculus (Mouse).